Reading from the N-terminus, the 199-residue chain is Holliday junction branch migration complex subunit RuvA (199 aa).

The segment at 1–63 is domain I; it reads MIDYIKGNLV…EDSQRLFGFT (63 aa). Residues 64-142 form a domain II region; sequence TRTERLLFEK…DMAPMLEPAA (79 aa). Positions 143–153 are flexible linker; it reads GADKQQKNPQL. Positions 153 to 199 are domain III; sequence LEDALEALRALGYVEKELKKVEKQLKAETLETDEYIRRALALMLKRP.

Belongs to the RuvA family. In terms of assembly, homotetramer. Forms an RuvA(8)-RuvB(12)-Holliday junction (HJ) complex. HJ DNA is sandwiched between 2 RuvA tetramers; dsDNA enters through RuvA and exits via RuvB. An RuvB hexamer assembles on each DNA strand where it exits the tetramer. Each RuvB hexamer is contacted by two RuvA subunits (via domain III) on 2 adjacent RuvB subunits; this complex drives branch migration. In the full resolvosome a probable DNA-RuvA(4)-RuvB(12)-RuvC(2) complex forms which resolves the HJ.

The protein localises to the cytoplasm. Functionally, the RuvA-RuvB-RuvC complex processes Holliday junction (HJ) DNA during genetic recombination and DNA repair, while the RuvA-RuvB complex plays an important role in the rescue of blocked DNA replication forks via replication fork reversal (RFR). RuvA specifically binds to HJ cruciform DNA, conferring on it an open structure. The RuvB hexamer acts as an ATP-dependent pump, pulling dsDNA into and through the RuvAB complex. HJ branch migration allows RuvC to scan DNA until it finds its consensus sequence, where it cleaves and resolves the cruciform DNA. This is Holliday junction branch migration complex subunit RuvA from Shouchella clausii (strain KSM-K16) (Alkalihalobacillus clausii).